Reading from the N-terminus, the 365-residue chain is G-protein coupled receptor 68 (365 aa).

The Extracellular portion of the chain corresponds to 1–12 (MGNITADNSSMS). Asparagine 3 and asparagine 8 each carry an N-linked (GlcNAc...) asparagine glycan. The chain crosses the membrane as a helical span at residues 13–49 (CTIDHTIHQTLAPVVYVTVLVVGFPANCLSLYFGYLQ). Cystine bridges form between cysteine 13–cysteine 258 and cysteine 94–cysteine 172. Topologically, residues 50 to 53 (IKAR) are cytoplasmic. Residues 54-84 (NELGVYLCNLTVADLFYICSLPFWLQYVLQH) traverse the membrane as a helical segment. Residues 85–89 (DNWSH) are Extracellular-facing. Residues 90 to 125 (GDLSCQVCGILLYENIYISVGFLCCISVDRYLAVAH) traverse the membrane as a helical segment. At 126–133 (PFRFHQFR) the chain is on the cytoplasmic side. Residues 134–160 (TLKAAVGVSVVIWAKELLTSIYFLMHE) traverse the membrane as a helical segment. Residues 161 to 176 (EVIEDENQHRVCFEHY) are Extracellular-facing. The tract at residues 161–176 (EVIEDENQHRVCFEHY) is extracellular loop 2 (ECL2). Residues 177–214 (PIQAWQRAINYYRFLVGFLFPICLLLASYQGILRAVRR) form a helical membrane-spanning segment. Over 215 to 218 (SHGT) the chain is Cytoplasmic. A helical membrane pass occupies residues 219–254 (QKSRKDQIQRLVLSTVVIFLACFLPYHVLLLVRSVW). The Extracellular portion of the chain corresponds to 255–260 (EASCDF). A helical transmembrane segment spans residues 261 to 289 (AKGVFNAYHFSLLLTSFNCVADPVLYCFV). The Cytoplasmic segment spans residues 290–365 (SETTHRDLAR…SGGFPTGRLA (76 aa)). Residues 345–365 (HPAFQTPNSPGSGGFPTGRLA) form a disordered region. The segment covering 355 to 365 (GSGGFPTGRLA) has biased composition (gly residues).

This sequence belongs to the G-protein coupled receptor 1 family. In terms of tissue distribution, found at low level in a wide range of tissues, but significantly expressed in lung, kidney, bone and nervous system.

The protein resides in the cell membrane. Activated by a network of residues that connects an extracellular-facing cavity to Glu-149, a conserved charged residue buried in the transmembrane core of the receptor. Protonation likely drives conformational changes in extracellular loop 2 (ECL2), which stabilizes movement of transmembrane 3 (TM3) and a series of rearrangements that connect the extracellular-facing cavity to Glu-149, a residue only conserved in proton-sensing G-protein coupled receptors. Activated in an allosteric manner by divalent metal ions at the extracellular surface following the order: Cd(2+) &gt; Co(2+) &gt; Ni(2+) &gt; Zn(2+) &gt; Fe(2+) &gt; Ca(2+) &gt; Mg(2+). Activated by the benzodiazepine drug lorazepam, a non-selective GPR68 positive allosteric modulator. Activated by ogerin (ZINC67740571), a selective GPR68 positive allosteric modulator. Activated by small molecule MS48107, a selective positive allosteric modulator. Inhibited by small molecule ogremorphin, inducing ferroptosis in cancer cells. Functionally, proton-sensing G-protein coupled receptor activated by extracellular pH, which is required to monitor pH changes and generate adaptive reactions. The receptor is almost silent at pH 7.8 but fully activated at pH 6.8. Ligand binding causes a conformation change that triggers signaling via guanine nucleotide-binding proteins (G proteins) and modulates the activity of downstream effectors, such as phospholipase C. GPR68 is mainly coupled to G(q) G proteins and mediates production of diacylglycerol (DAG) and inositol 1,4,5-trisphosphate (IP3). Acts as a key mechanosensor of fluid shear stress and membrane stretch. Expressed in endothelial cells of small-diameter resistance arteries, where it mediates flow-induced dilation in response to shear stress. May represents an osteoblastic pH sensor regulating cell-mediated responses to acidosis in bone. Acts as a regulator of calcium-sensing receptor CASR in a seesaw manner: GPR68-mediated signaling inhibits CASR signaling in response to protons, while CASR inhibits GPR68 in presence of extracellular calcium. This is G-protein coupled receptor 68 from Homo sapiens (Human).